The primary structure comprises 185 residues: V-type proton ATPase subunit E (185 aa).

The protein belongs to the V-ATPase E subunit family.

Its function is as follows. Produces ATP from ADP in the presence of a proton gradient across the membrane. The polypeptide is V-type proton ATPase subunit E (Deinococcus deserti (strain DSM 17065 / CIP 109153 / LMG 22923 / VCD115)).